A 764-amino-acid polypeptide reads, in one-letter code: Nucleolar transcription factor 1 (764 aa).

An N-acetylmethionine modification is found at Met1. Residues 1–21 (MNGEADCPTDLEMAAPKGQDR) form a disordered region. 2 DNA-binding regions (HMG box) span residues 112-180 (PKKP…ARFR) and 196-264 (PEKP…RDYI). Position 201 is a phosphothreonine (Thr201). Phosphoserine occurs at positions 273, 336, 364, 389, 412, 433, 435, 484, 495, 546, 584, and 638. The HMG box 3 DNA-binding region spans 298-362 (TKPPPNSYSL…DYEVELLRFL (65 aa)). Positions 381 to 411 (NINKKQATSPASKKPAQEGGKGGSEKPKRPV) are disordered. 3 consecutive DNA-binding regions (HMG box) follow at residues 407–475 (PKRP…GGER), 482–549 (PESP…SEMR), and 568–634 (KKPP…DLWV). Residues 459 to 487 (REAALKAQSERKPGGEREERGKLPESPKR) form a disordered region. A disordered region spans residues 546 to 576 (SEMRAPPAATNSSKKMKFQGEPKKPPMNGYQ). The disordered stretch occupies residues 648-764 (YISNKRKSMT…SGDSSDSDSN (117 aa)). Positions 664 to 674 (PKSSRTTLQSK) are enriched in polar residues. A compositionally biased stretch (acidic residues) spans 677–745 (SEEDDEEDED…DDDEDEDNES (69 aa)). Low complexity predominate over residues 746–758 (EGSSSSSSSSGDS).

In terms of assembly, homodimer. Part of Pol I pre-initiation complex (PIC), in which Pol I core assembles with RRN3 and promoter-bound UTBF and SL1/TIF-IB complex. Interacts with TOP2A in the context of Pol I complex. Interacts with TBP. Interacts with TAF1A. Interacts with RASL11A. Binds to IRS1 and PIK3CA. Interacts with DHX33. Interacts with PHF6. Interacts with CEBPA (isoform 1 and isoform 4). Interacts with DDX11. Interacts with NOP53. Interacts with ALKBH2. Phosphorylated and activated by PIK3CA.

The protein localises to the nucleus. It localises to the nucleolus. In terms of biological role, recognizes the ribosomal RNA gene promoter and activates transcription mediated by RNA polymerase I (Pol I) through cooperative interactions with the transcription factor SL1/TIF-IB complex. It binds specifically to the upstream control element and can activate Pol I promoter escape. This chain is Nucleolar transcription factor 1 (UBTF), found in Homo sapiens (Human).